We begin with the raw amino-acid sequence, 571 residues long: Proline--tRNA ligase (571 aa).

This sequence belongs to the class-II aminoacyl-tRNA synthetase family. ProS type 1 subfamily. Homodimer.

It localises to the cytoplasm. It catalyses the reaction tRNA(Pro) + L-proline + ATP = L-prolyl-tRNA(Pro) + AMP + diphosphate. In terms of biological role, catalyzes the attachment of proline to tRNA(Pro) in a two-step reaction: proline is first activated by ATP to form Pro-AMP and then transferred to the acceptor end of tRNA(Pro). As ProRS can inadvertently accommodate and process non-cognate amino acids such as alanine and cysteine, to avoid such errors it has two additional distinct editing activities against alanine. One activity is designated as 'pretransfer' editing and involves the tRNA(Pro)-independent hydrolysis of activated Ala-AMP. The other activity is designated 'posttransfer' editing and involves deacylation of mischarged Ala-tRNA(Pro). The misacylated Cys-tRNA(Pro) is not edited by ProRS. The polypeptide is Proline--tRNA ligase (Vibrio vulnificus (strain CMCP6)).